The sequence spans 406 residues: Homocysteine-responsive endoplasmic reticulum-resident ubiquitin-like domain member 2 protein (406 aa).

The region spanning 10 to 89 (VTLIIKAPNQ…HMVHLVCTSR (80 aa)) is the Ubiquitin-like domain. The segment at 86-154 (CTSRTPPSSP…TLPQAQTDQA (69 aa)) is disordered. Low complexity-rich tracts occupy residues 87-98 (TSRTPPSSPKSS) and 106-126 (ALAS…PSSG). Positions 127-154 (QETLSLAVGSSSEGLRQRTLPQAQTDQA) are enriched in polar residues. Residues 302–322 (FIMVMGAMLLVYLHQAGWFPF) traverse the membrane as a helical segment.

Its subcellular location is the membrane. Functionally, could be involved in the unfolded protein response (UPR) pathway. The polypeptide is Homocysteine-responsive endoplasmic reticulum-resident ubiquitin-like domain member 2 protein (HERPUD2) (Homo sapiens (Human)).